The sequence spans 1162 residues: ATP-dependent helicase/deoxyribonuclease subunit B (1162 aa).

Positions 1–275 (MELNAYIGRA…QFFKQQYRFN (275 aa)) constitute a UvrD-like helicase ATP-binding domain. Position 8–15 (8–15 (GRAGTGKS)) interacts with ATP. Positions 269–583 (KQQYRFNNKD…SIGTMDLAKV (315 aa)) constitute a UvrD-like helicase C-terminal domain. 4 residues coordinate [4Fe-4S] cluster: Cys784, Cys1117, Cys1120, and Cys1126.

The protein belongs to the helicase family. AddB/RexB type 1 subfamily. Heterodimer of AddA and AddB. Mg(2+) is required as a cofactor. It depends on [4Fe-4S] cluster as a cofactor.

The heterodimer acts as both an ATP-dependent DNA helicase and an ATP-dependent, dual-direction single-stranded exonuclease. Recognizes the chi site generating a DNA molecule suitable for the initiation of homologous recombination. The AddB subunit has 5' -&gt; 3' nuclease activity but not helicase activity. The protein is ATP-dependent helicase/deoxyribonuclease subunit B of Staphylococcus haemolyticus (strain JCSC1435).